A 94-amino-acid chain; its full sequence is Integration host factor subunit beta (94 aa).

Belongs to the bacterial histone-like protein family. Heterodimer of an alpha and a beta chain.

Functionally, this protein is one of the two subunits of integration host factor, a specific DNA-binding protein that functions in genetic recombination as well as in transcriptional and translational control. The protein is Integration host factor subunit beta (ihfB) of Pasteurella multocida (strain Pm70).